Here is a 192-residue protein sequence, read N- to C-terminus: Pyridoxine/pyridoxamine 5'-phosphate oxidase (192 aa).

FMN is bound by residues 41-46 (RMMLLK), 56-57 (FT), arginine 62, lysine 63, and glutamine 85. Lysine 46 contacts substrate. Substrate contacts are provided by tyrosine 103, arginine 107, and serine 111. FMN-binding positions include 120 to 121 (QS) and tryptophan 165. 171 to 173 (RLH) is a binding site for substrate. Arginine 175 provides a ligand contact to FMN.

This sequence belongs to the pyridoxamine 5'-phosphate oxidase family. In terms of assembly, homodimer. FMN is required as a cofactor.

It carries out the reaction pyridoxamine 5'-phosphate + O2 + H2O = pyridoxal 5'-phosphate + H2O2 + NH4(+). It catalyses the reaction pyridoxine 5'-phosphate + O2 = pyridoxal 5'-phosphate + H2O2. It participates in cofactor metabolism; pyridoxal 5'-phosphate salvage; pyridoxal 5'-phosphate from pyridoxamine 5'-phosphate: step 1/1. Its pathway is cofactor metabolism; pyridoxal 5'-phosphate salvage; pyridoxal 5'-phosphate from pyridoxine 5'-phosphate: step 1/1. Catalyzes the oxidation of either pyridoxine 5'-phosphate (PNP) or pyridoxamine 5'-phosphate (PMP) into pyridoxal 5'-phosphate (PLP). In Zymomonas mobilis subsp. mobilis (strain ATCC 31821 / ZM4 / CP4), this protein is Pyridoxine/pyridoxamine 5'-phosphate oxidase.